Here is a 142-residue protein sequence, read N- to C-terminus: MAIYGIGTDIAQVSRIAAVLERTGGRFAEKVLGPDELRVFHARRARSEARGIAFLATRFSAKEAFSKAIGLGMHWPMTWRALQTLNHPSGEPYVVASGELADWLAARGITARVTVSDERDYAVSFVVAETDAAPAPVSRTSS.

Residues D9 and E63 each coordinate Mg(2+).

It belongs to the P-Pant transferase superfamily. AcpS family. Mg(2+) serves as cofactor.

It is found in the cytoplasm. It carries out the reaction apo-[ACP] + CoA = holo-[ACP] + adenosine 3',5'-bisphosphate + H(+). Functionally, transfers the 4'-phosphopantetheine moiety from coenzyme A to a Ser of acyl-carrier-protein. The sequence is that of Holo-[acyl-carrier-protein] synthase from Burkholderia lata (strain ATCC 17760 / DSM 23089 / LMG 22485 / NCIMB 9086 / R18194 / 383).